Consider the following 210-residue polypeptide: Pyridoxine/pyridoxamine 5'-phosphate oxidase (210 aa).

Substrate-binding positions include 7-10 and Lys65; that span reads RQSY. FMN-binding positions include 60-65, 75-76, Arg81, Lys82, and Gln104; these read RIVLIK and FT. Substrate-binding residues include Tyr122, Arg126, and Ser130. Residues 139 to 140 and Trp182 each bind FMN; that span reads QS. 188-190 provides a ligand contact to substrate; that stretch reads RLH. Arg192 is a binding site for FMN.

It belongs to the pyridoxamine 5'-phosphate oxidase family. Homodimer. FMN serves as cofactor.

It catalyses the reaction pyridoxamine 5'-phosphate + O2 + H2O = pyridoxal 5'-phosphate + H2O2 + NH4(+). The catalysed reaction is pyridoxine 5'-phosphate + O2 = pyridoxal 5'-phosphate + H2O2. The protein operates within cofactor metabolism; pyridoxal 5'-phosphate salvage; pyridoxal 5'-phosphate from pyridoxamine 5'-phosphate: step 1/1. Its pathway is cofactor metabolism; pyridoxal 5'-phosphate salvage; pyridoxal 5'-phosphate from pyridoxine 5'-phosphate: step 1/1. Its function is as follows. Catalyzes the oxidation of either pyridoxine 5'-phosphate (PNP) or pyridoxamine 5'-phosphate (PMP) into pyridoxal 5'-phosphate (PLP). The protein is Pyridoxine/pyridoxamine 5'-phosphate oxidase of Bordetella avium (strain 197N).